We begin with the raw amino-acid sequence, 245 residues long: 5'-nucleotidase SurE (245 aa).

Residues Asp-8, Asp-9, Ser-39, and Asn-91 each coordinate a divalent metal cation.

The protein belongs to the SurE nucleotidase family. A divalent metal cation serves as cofactor.

Its subcellular location is the cytoplasm. The catalysed reaction is a ribonucleoside 5'-phosphate + H2O = a ribonucleoside + phosphate. Functionally, nucleotidase that shows phosphatase activity on nucleoside 5'-monophosphates. This chain is 5'-nucleotidase SurE, found in Herminiimonas arsenicoxydans.